The primary structure comprises 350 residues: Protein pelota homolog (350 aa).

Belongs to the eukaryotic release factor 1 family. Pelota subfamily. Monomer. Requires a divalent metal cation as cofactor.

The protein resides in the cytoplasm. Functionally, may function in recognizing stalled ribosomes, interact with stem-loop structures in stalled mRNA molecules, and effect endonucleolytic cleavage of the mRNA. May play a role in the release non-functional ribosomes and degradation of damaged mRNAs. Has endoribonuclease activity. The protein is Protein pelota homolog of Methanosarcina barkeri (strain Fusaro / DSM 804).